The chain runs to 355 residues: UDP-N-acetylglucosamine--N-acetylmuramyl-(pentapeptide) pyrophosphoryl-undecaprenol N-acetylglucosamine transferase (355 aa).

UDP-N-acetyl-alpha-D-glucosamine is bound by residues 14 to 16 (TGG), asparagine 126, arginine 162, serine 190, isoleucine 243, 262 to 267 (ALTVSE), and glutamine 287.

It belongs to the glycosyltransferase 28 family. MurG subfamily.

Its subcellular location is the cell inner membrane. The catalysed reaction is di-trans,octa-cis-undecaprenyl diphospho-N-acetyl-alpha-D-muramoyl-L-alanyl-D-glutamyl-meso-2,6-diaminopimeloyl-D-alanyl-D-alanine + UDP-N-acetyl-alpha-D-glucosamine = di-trans,octa-cis-undecaprenyl diphospho-[N-acetyl-alpha-D-glucosaminyl-(1-&gt;4)]-N-acetyl-alpha-D-muramoyl-L-alanyl-D-glutamyl-meso-2,6-diaminopimeloyl-D-alanyl-D-alanine + UDP + H(+). The protein operates within cell wall biogenesis; peptidoglycan biosynthesis. In terms of biological role, cell wall formation. Catalyzes the transfer of a GlcNAc subunit on undecaprenyl-pyrophosphoryl-MurNAc-pentapeptide (lipid intermediate I) to form undecaprenyl-pyrophosphoryl-MurNAc-(pentapeptide)GlcNAc (lipid intermediate II). The sequence is that of UDP-N-acetylglucosamine--N-acetylmuramyl-(pentapeptide) pyrophosphoryl-undecaprenol N-acetylglucosamine transferase from Vibrio parahaemolyticus serotype O3:K6 (strain RIMD 2210633).